Consider the following 72-residue polypeptide: Translation initiation factor IF-1 (72 aa).

The region spanning 1–72 (MAKEDVIEMQ…SKGRIVFRAR (72 aa)) is the S1-like domain.

This sequence belongs to the IF-1 family. Component of the 30S ribosomal translation pre-initiation complex which assembles on the 30S ribosome in the order IF-2 and IF-3, IF-1 and N-formylmethionyl-tRNA(fMet); mRNA recruitment can occur at any time during PIC assembly.

It is found in the cytoplasm. Its function is as follows. One of the essential components for the initiation of protein synthesis. Stabilizes the binding of IF-2 and IF-3 on the 30S subunit to which N-formylmethionyl-tRNA(fMet) subsequently binds. Helps modulate mRNA selection, yielding the 30S pre-initiation complex (PIC). Upon addition of the 50S ribosomal subunit IF-1, IF-2 and IF-3 are released leaving the mature 70S translation initiation complex. The polypeptide is Translation initiation factor IF-1 (Vibrio cholerae serotype O1 (strain ATCC 39541 / Classical Ogawa 395 / O395)).